Reading from the N-terminus, the 378-residue chain is MGISLSKRRRDNNNNHHHPHHNPPYYYSDPPPQQPPPQNGYSYSHNYPVSTPQLSLPPPPAQPPSSSQPPPSQISYRPYGQNYHQNQYYPQQAPPYFTGYHHNGFNPMMRPVYFGPTPVAVMEPPAPYVEHQTAKKVKNDVNVNKATVRLVADDLNPGHYLVSFVFDALFDGSFTIIFFGEEESKCTIVPHLPEAFPPIKVPFQKGAGQKFLQAPGTGIDLGFFSLDDLSKPSPEEVYPLVISAETVISPSSVSEEPLVHKQITQAVLEKTNDGSFKVKVMKQILWIEGERYELQELYGIDNSITQGTAASGLEDTGGKECVICLTEPKDTAVMPCRHLCLCSDCAEELRFQTNKCPICRQPIHELVKIKVESSDEQH.

Basic residues predominate over residues 1–21 (MGISLSKRRRDNNNNHHHPHH). Residues 1-79 (MGISLSKRRR…PPSQISYRPY (79 aa)) are disordered. Residue Gly-2 is the site of N-myristoyl glycine attachment. 2 stretches are compositionally biased toward pro residues: residues 29 to 38 (DPPPQQPPPQ) and 55 to 72 (SLPP…PPPS). The DAR2 domain stretch occupies residues 164 to 283 (FVFDALFDGS…GSFKVKVMKQ (120 aa)). The segment at 321 to 360 (CVICLTEPKDTAVMPCRHLCLCSDCAEELRFQTNKCPICR) adopts an RING-type; atypical zinc-finger fold.

Belongs to the RING-type zinc finger family. LOG2 subfamily. Post-translationally, myristoylated (in vitro).

The enzyme catalyses S-ubiquitinyl-[E2 ubiquitin-conjugating enzyme]-L-cysteine + [acceptor protein]-L-lysine = [E2 ubiquitin-conjugating enzyme]-L-cysteine + N(6)-ubiquitinyl-[acceptor protein]-L-lysine.. Its pathway is protein modification; protein ubiquitination. Acts as an E3 ubiquitin-protein ligase, or as part of E3 complex, which accepts ubiquitin from specific E2 ubiquitin-conjugating enzymes and then transfers it to substrates (in vitro). This Arabidopsis thaliana (Mouse-ear cress) protein is Probable E3 ubiquitin-protein ligase LUL3 (LUL3).